Reading from the N-terminus, the 444-residue chain is Methylenetetrahydrofolate--tRNA-(uracil-5-)-methyltransferase TrmFO (444 aa).

10–15 (GAGLAG) lines the FAD pocket.

Belongs to the MnmG family. TrmFO subfamily. FAD serves as cofactor.

It localises to the cytoplasm. It catalyses the reaction uridine(54) in tRNA + (6R)-5,10-methylene-5,6,7,8-tetrahydrofolate + NADH + H(+) = 5-methyluridine(54) in tRNA + (6S)-5,6,7,8-tetrahydrofolate + NAD(+). The enzyme catalyses uridine(54) in tRNA + (6R)-5,10-methylene-5,6,7,8-tetrahydrofolate + NADPH + H(+) = 5-methyluridine(54) in tRNA + (6S)-5,6,7,8-tetrahydrofolate + NADP(+). Catalyzes the folate-dependent formation of 5-methyl-uridine at position 54 (M-5-U54) in all tRNAs. In Streptococcus agalactiae serotype III (strain NEM316), this protein is Methylenetetrahydrofolate--tRNA-(uracil-5-)-methyltransferase TrmFO.